Here is a 204-residue protein sequence, read N- to C-terminus: Putative AgrB-like protein (204 aa).

4 helical membrane-spanning segments follow: residues 52 to 74 (YGIA…YLWL), 87 to 107 (LNCT…FQNI), 111 to 131 (NWIV…FAPA), and 156 to 176 (LILT…LIMV).

It belongs to the AgrB family.

The protein localises to the cell membrane. Functionally, may be involved in the proteolytic processing of a quorum sensing system signal molecule precursor. The chain is Putative AgrB-like protein from Listeria monocytogenes serotype 4b (strain CLIP80459).